The chain runs to 398 residues: Pectate lyase 1 (398 aa).

An N-terminal signal peptide occupies residues 1–25 (MGIKHCCYILYFTLALVTLLQPVRS). N-linked (GlcNAc...) asparagine glycosylation occurs at N37. A disulfide bridge links C55 with C72. Ca(2+) is bound by residues D195, D219, and D223. R275 is an active-site residue.

Belongs to the polysaccharide lyase 1 family. Amb a subfamily. As to quaternary structure, monomer. The cofactor is Ca(2+). In terms of processing, the N-terminus is blocked. As to expression, pollen and flowers.

It catalyses the reaction Eliminative cleavage of (1-&gt;4)-alpha-D-galacturonan to give oligosaccharides with 4-deoxy-alpha-D-galact-4-enuronosyl groups at their non-reducing ends.. It participates in glycan metabolism; pectin degradation; 2-dehydro-3-deoxy-D-gluconate from pectin: step 2/5. In terms of biological role, has pectate lyase activity. This Ambrosia artemisiifolia (Common ragweed) protein is Pectate lyase 1.